The sequence spans 464 residues: Argininosuccinate lyase (464 aa).

The protein belongs to the lyase 1 family. Argininosuccinate lyase subfamily.

The protein localises to the cytoplasm. It carries out the reaction 2-(N(omega)-L-arginino)succinate = fumarate + L-arginine. It functions in the pathway amino-acid biosynthesis; L-arginine biosynthesis; L-arginine from L-ornithine and carbamoyl phosphate: step 3/3. This Pseudomonas putida (strain W619) protein is Argininosuccinate lyase.